The primary structure comprises 259 residues: Ribonuclease T2-B (259 aa).

A signal peptide spans 1–29 (MAPAEARGALPGWISVLGWGLALCSLCGA). Cys53 and Cys59 are oxidised to a cystine. Residue His69 is part of the active site. 3 disulfide bridges follow: Cys79/Cys125, Cys188/Cys244, and Cys206/Cys217. 2 N-linked (GlcNAc...) asparagine glycosylation sites follow: Asn80 and Asn110. Residues Glu118 and His122 contribute to the active site. Asn216 carries an N-linked (GlcNAc...) asparagine glycan.

The protein belongs to the RNase T2 family.

The protein resides in the secreted. The protein localises to the lysosome lumen. It localises to the endoplasmic reticulum lumen. It is found in the mitochondrion intermembrane space. It carries out the reaction a ribonucleotidyl-ribonucleotide-RNA + H2O = a 3'-end 3'-phospho-ribonucleotide-RNA + a 5'-end dephospho-ribonucleoside-RNA + H(+). It catalyses the reaction an adenylyl-uridine-RNA = a 3'-end 2',3'-cyclophospho-AMP-RNA + a 5'-end dephospho-uridine-RNA. The enzyme catalyses a guanylyl-uridine-RNA = a 3'-end 2',3'-cyclophospho-GMP-RNA + a 5'-end dephospho-uridine-RNA. Inhibited by Zn(2+) and Cu(2+). Functionally, ribonuclease that plays an essential role in innate immune response by recognizing and degrading RNAs from microbial pathogens that are subsequently sensed by TLR8. Cleaves preferentially single-stranded RNA molecules between purine and uridine residues, which critically contributes to the supply of catabolic uridine and the generation of purine-2',3'-cyclophosphate-terminated oligoribonucleotides. In turn, RNase T2 degradation products promote the RNA-dependent activation of TLR8. In plasmacytoid dendritic cells, it cooperates with PLD3 or PLD4 5'-&gt;3' exonucleases to process RNA fragments and release 2',3'-cyclic guanosine monophosphate (2',3'-cGMP), a potent stimulatory ligand for TLR7. Also plays a key role in degradation of mitochondrial RNA and processing of non-coding RNA imported from the cytosol into mitochondria. Participates as well in degradation of mitochondrion-associated cytosolic rRNAs. The polypeptide is Ribonuclease T2-B (Mus musculus (Mouse)).